We begin with the raw amino-acid sequence, 35 residues long: Potassium channel toxin alpha-KTx 6.1 (35 aa).

Intrachain disulfides connect Cys-4/Cys-25, Cys-10/Cys-30, Cys-14/Cys-32, and Cys-20/Cys-35.

The protein belongs to the short scorpion toxin superfamily. Potassium channel inhibitor family. Alpha-KTx 06 subfamily. Expressed by the venom gland.

The protein resides in the secreted. In terms of biological role, potently and reversibly inhibits the insect voltage-gated Shaker (Sh) potassium channel (isoform alpha (B)), the mammalian voltage-gated potassium channels Kv1.2/KCNA2 (IC(50)=0.44 nM), and the calcium-activated potassium channel KCa2.3/KCNN3 (Kd=330 nM). Its effect on Kv1.3/KCNA3 is controversial, since this channel is voltage-independently inhibited in PubMed:9464266, but is not affected in PubMed:10931199. Furthermore, this toxin competes with apamin (a small conductance calcium-activated potassium channel inhibitor) for binding to rat brain synaptosomes. In Pandinus imperator (Emperor scorpion), this protein is Potassium channel toxin alpha-KTx 6.1.